A 427-amino-acid polypeptide reads, in one-letter code: Trigger factor (427 aa).

In terms of domain architecture, PPIase FKBP-type spans Gly163–Pro248.

Belongs to the FKBP-type PPIase family. Tig subfamily.

The protein localises to the cytoplasm. It carries out the reaction [protein]-peptidylproline (omega=180) = [protein]-peptidylproline (omega=0). Functionally, involved in protein export. Acts as a chaperone by maintaining the newly synthesized protein in an open conformation. Functions as a peptidyl-prolyl cis-trans isomerase. The protein is Trigger factor of Streptococcus agalactiae serotype Ia (strain ATCC 27591 / A909 / CDC SS700).